Consider the following 214-residue polypeptide: Thiamine-phosphate synthase (214 aa).

Residues Gln40–Lys44 and Asn72 each bind 4-amino-2-methyl-5-(diphosphooxymethyl)pyrimidine. Mg(2+) contacts are provided by Asp73 and Asp92. 4-amino-2-methyl-5-(diphosphooxymethyl)pyrimidine is bound at residue Ser110. Residue Ser137–Thr139 coordinates 2-[(2R,5Z)-2-carboxy-4-methylthiazol-5(2H)-ylidene]ethyl phosphate. Lys140 contributes to the 4-amino-2-methyl-5-(diphosphooxymethyl)pyrimidine binding site. 2-[(2R,5Z)-2-carboxy-4-methylthiazol-5(2H)-ylidene]ethyl phosphate contacts are provided by residues Gly167 and Ile185–Ser186.

It belongs to the thiamine-phosphate synthase family. Mg(2+) serves as cofactor.

The enzyme catalyses 2-[(2R,5Z)-2-carboxy-4-methylthiazol-5(2H)-ylidene]ethyl phosphate + 4-amino-2-methyl-5-(diphosphooxymethyl)pyrimidine + 2 H(+) = thiamine phosphate + CO2 + diphosphate. The catalysed reaction is 2-(2-carboxy-4-methylthiazol-5-yl)ethyl phosphate + 4-amino-2-methyl-5-(diphosphooxymethyl)pyrimidine + 2 H(+) = thiamine phosphate + CO2 + diphosphate. It catalyses the reaction 4-methyl-5-(2-phosphooxyethyl)-thiazole + 4-amino-2-methyl-5-(diphosphooxymethyl)pyrimidine + H(+) = thiamine phosphate + diphosphate. It participates in cofactor biosynthesis; thiamine diphosphate biosynthesis; thiamine phosphate from 4-amino-2-methyl-5-diphosphomethylpyrimidine and 4-methyl-5-(2-phosphoethyl)-thiazole: step 1/1. Its function is as follows. Condenses 4-methyl-5-(beta-hydroxyethyl)thiazole monophosphate (THZ-P) and 2-methyl-4-amino-5-hydroxymethyl pyrimidine pyrophosphate (HMP-PP) to form thiamine monophosphate (TMP). This is Thiamine-phosphate synthase from Wolinella succinogenes (strain ATCC 29543 / DSM 1740 / CCUG 13145 / JCM 31913 / LMG 7466 / NCTC 11488 / FDC 602W) (Vibrio succinogenes).